Here is a 403-residue protein sequence, read N- to C-terminus: S-adenosylmethionine synthase (403 aa).

Residue H17 coordinates ATP. Position 19 (D19) interacts with Mg(2+). K(+) is bound at residue E45. Residues E58 and Q104 each contribute to the L-methionine site. The flexible loop stretch occupies residues 104–114 (QSPDIAQGVDT). ATP contacts are provided by residues 179–181 (DGK), 250–251 (KF), D259, 265–266 (RK), A282, and K286. An L-methionine-binding site is contributed by D259. K290 lines the L-methionine pocket.

Belongs to the AdoMet synthase family. As to quaternary structure, homotetramer; dimer of dimers. Requires Mg(2+) as cofactor. The cofactor is K(+).

The protein localises to the cytoplasm. It catalyses the reaction L-methionine + ATP + H2O = S-adenosyl-L-methionine + phosphate + diphosphate. The protein operates within amino-acid biosynthesis; S-adenosyl-L-methionine biosynthesis; S-adenosyl-L-methionine from L-methionine: step 1/1. Functionally, catalyzes the formation of S-adenosylmethionine (AdoMet) from methionine and ATP. The overall synthetic reaction is composed of two sequential steps, AdoMet formation and the subsequent tripolyphosphate hydrolysis which occurs prior to release of AdoMet from the enzyme. This is S-adenosylmethionine synthase from Mycobacterium marinum (strain ATCC BAA-535 / M).